Here is a 104-residue protein sequence, read N- to C-terminus: Large ribosomal subunit protein uL24 (104 aa).

Belongs to the universal ribosomal protein uL24 family. In terms of assembly, part of the 50S ribosomal subunit.

Its function is as follows. One of two assembly initiator proteins, it binds directly to the 5'-end of the 23S rRNA, where it nucleates assembly of the 50S subunit. Functionally, one of the proteins that surrounds the polypeptide exit tunnel on the outside of the subunit. The protein is Large ribosomal subunit protein uL24 of Shewanella denitrificans (strain OS217 / ATCC BAA-1090 / DSM 15013).